The primary structure comprises 542 residues: Putative inactive cadmium/zinc-transporting ATPase HMA3 (542 aa).

Residues 1–89 (MAEGEESKKM…VRPYGETSLK (89 aa)) lie on the Cytoplasmic side of the membrane. One can recognise an HMA domain in the interval 13–79 (QTSYFDVVGI…ALNQARLEAS (67 aa)). A helical membrane pass occupies residues 90–111 (SQWPSPFAIVSGVLLVLSFFKY). Over 112-114 (FYS) the chain is Extracellular. Residues 115–134 (PLEWLAIVAVVAGVFPILAK) traverse the membrane as a helical segment. Topologically, residues 135–141 (AVASVTR) are cytoplasmic. A helical membrane pass occupies residues 142–162 (FRLDINALTLIAVIATLCMQD). Residue Phe163 is a topological domain, extracellular. A helical transmembrane segment spans residues 164 to 184 (TEAATIVFLFSVADWLESSAA). Over 185–310 (HKASIVMSSL…QTKTQRFIDK (126 aa)) the chain is Cytoplasmic. Residues 311-333 (CSRYYTPAVVVSAACFAVIPVLL) form a helical membrane-spanning segment. Topologically, residues 334 to 341 (KVQDLSHW) are extracellular. Residues 342–359 (FHLALVVLVSGCPCGLIL) traverse the membrane as a helical segment. At 360–542 (STPVATFCAL…VAQALKELKS (183 aa)) the chain is on the cytoplasmic side.

The protein belongs to the cation transport ATPase (P-type) (TC 3.A.3) family. Type IB subfamily.

Its subcellular location is the membrane. In Arabidopsis thaliana (Mouse-ear cress), this protein is Putative inactive cadmium/zinc-transporting ATPase HMA3 (HMA3).